Consider the following 436-residue polypeptide: D-amino acid dehydrogenase (436 aa).

An FAD-binding site is contributed by 3-17 (ILILGSGVIGVTSAW).

This sequence belongs to the DadA oxidoreductase family. It depends on FAD as a cofactor.

It carries out the reaction a D-alpha-amino acid + A + H2O = a 2-oxocarboxylate + AH2 + NH4(+). It functions in the pathway amino-acid degradation; D-alanine degradation; NH(3) and pyruvate from D-alanine: step 1/1. Functionally, oxidative deamination of D-amino acids. The sequence is that of D-amino acid dehydrogenase from Photorhabdus laumondii subsp. laumondii (strain DSM 15139 / CIP 105565 / TT01) (Photorhabdus luminescens subsp. laumondii).